A 219-amino-acid chain; its full sequence is Cytochrome b6 (219 aa).

A helical membrane pass occupies residues 32–52 (IFYCFGGIVLTAFIFQGASGF). Cys-35 is a binding site for heme c. Heme b contacts are provided by His-86 and His-100. 3 helical membrane passes run 90-110 (SGCM…TGGF), 116-136 (LTWI…VTGY), and 190-210 (IHTF…FSLL). Residues His-191 and His-206 each coordinate heme b.

This sequence belongs to the cytochrome b family. PetB subfamily. The 4 large subunits of the cytochrome b6-f complex are cytochrome b6, subunit IV (17 kDa polypeptide, PetD), cytochrome f and the Rieske protein, while the 4 small subunits are PetG, PetL, PetM and PetN. The complex functions as a dimer. It depends on heme b as a cofactor. Heme c serves as cofactor.

It localises to the plastid. Its subcellular location is the chloroplast thylakoid membrane. Functionally, component of the cytochrome b6-f complex, which mediates electron transfer between photosystem II (PSII) and photosystem I (PSI), cyclic electron flow around PSI, and state transitions. In Heterocapsa triquetra (Dinoflagellate), this protein is Cytochrome b6.